The chain runs to 307 residues: Ribonuclease Z (307 aa).

His63, His65, Asp67, His68, His141, Asp212, and His270 together coordinate Zn(2+). Catalysis depends on Asp67, which acts as the Proton acceptor.

The protein belongs to the RNase Z family. In terms of assembly, homodimer. Requires Zn(2+) as cofactor.

It catalyses the reaction Endonucleolytic cleavage of RNA, removing extra 3' nucleotides from tRNA precursor, generating 3' termini of tRNAs. A 3'-hydroxy group is left at the tRNA terminus and a 5'-phosphoryl group is left at the trailer molecule.. Zinc phosphodiesterase, which displays some tRNA 3'-processing endonuclease activity. Probably involved in tRNA maturation, by removing a 3'-trailer from precursor tRNA. The sequence is that of Ribonuclease Z from Bacillus thuringiensis subsp. konkukian (strain 97-27).